A 510-amino-acid polypeptide reads, in one-letter code: Cytochrome P450 monooxygenase ptmK (510 aa).

The helical transmembrane segment at 2-22 (IIVTFFWVGIVLSAIWTFYKV) threads the bilayer. 3 N-linked (GlcNAc...) asparagine glycosylation sites follow: N313, N408, and N443. C456 contributes to the heme binding site.

This sequence belongs to the cytochrome P450 family. Heme is required as a cofactor.

It is found in the membrane. It functions in the pathway secondary metabolite biosynthesis. Functionally, cytochrome P450 monooxygenase; part of the gene cluster that mediates the biosynthesis of the indole diterpenes penitrems. The geranylgeranyl diphosphate (GGPP) synthase ptmG catalyzes the first step in penitrem biosynthesis via conversion of farnesyl pyrophosphate and isopentyl pyrophosphate into geranylgeranyl pyrophosphate (GGPP). Condensation of indole-3-glycerol phosphate with GGPP by the prenyl transferase ptmC then forms 3-geranylgeranylindole (3-GGI). Epoxidation by the FAD-dependent monooxygenase ptmM leads to a epoxidized-GGI that is substrate of the terpene cyclase ptmB for cyclization to yield paspaline. Paspaline is subsequently converted to 13-desoxypaxilline by the cytochrome P450 monooxygenase ptmP, the latter being then converted to paxilline by the cytochrome P450 monooxygenase ptmQ. Paxilline is converted to beta-paxitriol via C-10 ketoreduction by the short-chain dehydrogenase ptmH which can be monoprenylated at the C-20 by the indole diterpene prenyltransferase ptmD. A two-step elimination (acetylation and elimination) process performed by the O-acetyltransferase ptmV and ptmI leads to the production of the prenylated form of penijanthine. The FAD-linked oxidoreductase ptmO then converts the prenylated form of penijanthine into PC-M5 which is in turn transformed into PC-M4 by the aromatic dimethylallyltransferase ptmE. Five sequential oxidative transformations performed by the cytochrome P450 monooxygenases ptmK, ptmU, ptmL, ptmN and ptmJ yield the various penitrem compounds. PtmK, ptmU and ptmM are involved in the formation of the key bicyclic ring of penitrem C via the formation of the intermediates secopenitrem D and penitrem D. PtmL catalyzes the epoxidation of penitrem D and C to yield penitrem B and F, respectively. PtmJ catalyzes the last benzylic hydroxylation to convert penitrem B to prenitrem E and penitrem F to penitrem A. The sequence is that of Cytochrome P450 monooxygenase ptmK from Penicillium ochrochloron.